A 201-amino-acid polypeptide reads, in one-letter code: MIALIDYKAGNLNSVAKAFEKIGAINFIAKNPKDLQKADKLLLPGVGSFKEAMKNLKELGFIEALKEQVLVQKKPILGICLGMQLFLERGYEGGVCEGLGFIEGEVVKFEEDLNLKIPHMGWNELEILKQDPLYQGINNKSDFYFVHSFYVKCKDEFVSAKAQYGHKFVASLQKDRIFATQFHPEKSQNLGLKLLENFARL.

In terms of domain architecture, Glutamine amidotransferase type-1 spans 1–201 (MIALIDYKAG…LKLLENFARL (201 aa)). The active-site Nucleophile is the Cys80. Active-site residues include His183 and Glu185.

As to quaternary structure, heterodimer of HisH and HisF.

Its subcellular location is the cytoplasm. The enzyme catalyses 5-[(5-phospho-1-deoxy-D-ribulos-1-ylimino)methylamino]-1-(5-phospho-beta-D-ribosyl)imidazole-4-carboxamide + L-glutamine = D-erythro-1-(imidazol-4-yl)glycerol 3-phosphate + 5-amino-1-(5-phospho-beta-D-ribosyl)imidazole-4-carboxamide + L-glutamate + H(+). The catalysed reaction is L-glutamine + H2O = L-glutamate + NH4(+). It functions in the pathway amino-acid biosynthesis; L-histidine biosynthesis; L-histidine from 5-phospho-alpha-D-ribose 1-diphosphate: step 5/9. Functionally, IGPS catalyzes the conversion of PRFAR and glutamine to IGP, AICAR and glutamate. The HisH subunit provides the glutamine amidotransferase activity that produces the ammonia necessary to HisF for the synthesis of IGP and AICAR. The polypeptide is Imidazole glycerol phosphate synthase subunit HisH 1 (hisH1) (Campylobacter jejuni subsp. jejuni serotype O:23/36 (strain 81-176)).